The following is a 224-amino-acid chain: Cytidylate kinase (224 aa).

Position 11–19 (11–19) interacts with ATP; the sequence is GPAAAGKST.

Belongs to the cytidylate kinase family. Type 1 subfamily.

The protein resides in the cytoplasm. It carries out the reaction CMP + ATP = CDP + ADP. It catalyses the reaction dCMP + ATP = dCDP + ADP. The protein is Cytidylate kinase of Bacillus velezensis (strain DSM 23117 / BGSC 10A6 / LMG 26770 / FZB42) (Bacillus amyloliquefaciens subsp. plantarum).